Reading from the N-terminus, the 159-residue chain is Large ribosomal subunit protein uL15 (159 aa).

The span at 1–13 shows a compositional bias: basic and acidic residues; it reads MRLNELRDNDGAT. Positions 1–41 are disordered; that stretch reads MRLNELRDNDGATKIRTRVGRGIGSGKGKTGGRGVKGQKSR. Positions 21 to 35 are enriched in gly residues; the sequence is RGIGSGKGKTGGRGV.

This sequence belongs to the universal ribosomal protein uL15 family. Part of the 50S ribosomal subunit.

In terms of biological role, binds to the 23S rRNA. The polypeptide is Large ribosomal subunit protein uL15 (Maricaulis maris (strain MCS10) (Caulobacter maris)).